The sequence spans 330 residues: NADH-quinone oxidoreductase subunit H (330 aa).

8 consecutive transmembrane segments (helical) span residues 11–31 (ILVA…CGAL), 81–101 (FIFV…FAII), 114–134 (IGIL…LFAG), 154–174 (ISYE…VGSF), 187–207 (LWFI…GVAV), 238–258 (FFVG…TLFF), 270–290 (QIPF…FILL), and 309–329 (FCLP…LAAA).

This sequence belongs to the complex I subunit 1 family. As to quaternary structure, NDH-1 is composed of 13 different subunits. Subunits NuoA, H, J, K, L, M, N constitute the membrane sector of the complex.

Its subcellular location is the cell inner membrane. It carries out the reaction a quinone + NADH + 5 H(+)(in) = a quinol + NAD(+) + 4 H(+)(out). NDH-1 shuttles electrons from NADH, via FMN and iron-sulfur (Fe-S) centers, to quinones in the respiratory chain. The immediate electron acceptor for the enzyme in this species is believed to be ubiquinone. Couples the redox reaction to proton translocation (for every two electrons transferred, four hydrogen ions are translocated across the cytoplasmic membrane), and thus conserves the redox energy in a proton gradient. This subunit may bind ubiquinone. This Ectopseudomonas mendocina (strain ymp) (Pseudomonas mendocina) protein is NADH-quinone oxidoreductase subunit H.